Here is a 242-residue protein sequence, read N- to C-terminus: Leucyl/phenylalanyl-tRNA--protein transferase (242 aa).

It belongs to the L/F-transferase family.

Its subcellular location is the cytoplasm. It catalyses the reaction N-terminal L-lysyl-[protein] + L-leucyl-tRNA(Leu) = N-terminal L-leucyl-L-lysyl-[protein] + tRNA(Leu) + H(+). It carries out the reaction N-terminal L-arginyl-[protein] + L-leucyl-tRNA(Leu) = N-terminal L-leucyl-L-arginyl-[protein] + tRNA(Leu) + H(+). The enzyme catalyses L-phenylalanyl-tRNA(Phe) + an N-terminal L-alpha-aminoacyl-[protein] = an N-terminal L-phenylalanyl-L-alpha-aminoacyl-[protein] + tRNA(Phe). Functions in the N-end rule pathway of protein degradation where it conjugates Leu, Phe and, less efficiently, Met from aminoacyl-tRNAs to the N-termini of proteins containing an N-terminal arginine or lysine. In Edwardsiella ictaluri (strain 93-146), this protein is Leucyl/phenylalanyl-tRNA--protein transferase.